Reading from the N-terminus, the 210-residue chain is MKKGLIAKKLGMTQIFAEDGKRIPVTVVQAGPCVVLQKKTSATDGYDAIQVGFLSQEARKVTKPMLGHIKAAGQGAFAHIREFRLDDVDRYNVGDVISADAFEVGEYIDVTGTSIGKGFQGVIKRWGFRGGRSSHGSCFHRAPGSIGSSAYPSRVFKNKKMPGQLGNERVTVQRLQVVRVDAADNILLIKGAIPGAKNGIVLVKDTVKPR.

It belongs to the universal ribosomal protein uL3 family. In terms of assembly, part of the 50S ribosomal subunit. Forms a cluster with proteins L14 and L19.

One of the primary rRNA binding proteins, it binds directly near the 3'-end of the 23S rRNA, where it nucleates assembly of the 50S subunit. The polypeptide is Large ribosomal subunit protein uL3 (Geobacter sulfurreducens (strain ATCC 51573 / DSM 12127 / PCA)).